Consider the following 365-residue polypeptide: DNA polymerase IV (365 aa).

One can recognise a UmuC domain in the interval 14 to 198 (IIHIDMDAFF…LPIEKFHGVG (185 aa)). D18 and D116 together coordinate Mg(2+). The active site involves E117.

Belongs to the DNA polymerase type-Y family. Monomer. Mg(2+) is required as a cofactor.

Its subcellular location is the cytoplasm. The enzyme catalyses DNA(n) + a 2'-deoxyribonucleoside 5'-triphosphate = DNA(n+1) + diphosphate. Functionally, poorly processive, error-prone DNA polymerase involved in untargeted mutagenesis. Copies undamaged DNA at stalled replication forks, which arise in vivo from mismatched or misaligned primer ends. These misaligned primers can be extended by PolIV. Exhibits no 3'-5' exonuclease (proofreading) activity. May be involved in translesional synthesis, in conjunction with the beta clamp from PolIII. This chain is DNA polymerase IV, found in Streptococcus pyogenes serotype M3 (strain ATCC BAA-595 / MGAS315).